The chain runs to 531 residues: T-complex protein 1 subunit zeta (531 aa).

Residue Ala2 is modified to N-acetylalanine. The residue at position 5 (Lys5) is an N6-acetyllysine. Position 39 (Gly39) interacts with ADP. Position 39 (Gly39) interacts with ATP. Mg(2+) is bound at residue Asp90. The ADP site is built by Gly91, Thr92, Thr93, Ser94, Thr158, and Lys159. The ATP site is built by Gly91, Thr92, and Thr93. Lys199 is subject to N6-acetyllysine. Ser205 carries the phosphoserine modification. A Glycyl lysine isopeptide (Lys-Gly) (interchain with G-Cter in SUMO2) cross-link involves residue Lys251. N6-acetyllysine occurs at positions 287, 365, 377, and 388. Residue Ala411 coordinates ADP. Residues Ala411, Gly412, Asp496, and Lys501 each coordinate ATP. Asp496 contributes to the ADP binding site.

It belongs to the TCP-1 chaperonin family. Component of the chaperonin-containing T-complex (TRiC), a hexadecamer composed of two identical back-to-back stacked rings enclosing a protein folding chamber. Each ring is made up of eight different subunits: TCP1/CCT1, CCT2, CCT3, CCT4, CCT5, CCT6A/CCT6, CCT7, CCT8. Interacts with PACRG.

It is found in the cytoplasm. The enzyme catalyses ATP + H2O = ADP + phosphate + H(+). Component of the chaperonin-containing T-complex (TRiC), a molecular chaperone complex that assists the folding of actin, tubulin and other proteins upon ATP hydrolysis. The TRiC complex mediates the folding of WRAP53/TCAB1, thereby regulating telomere maintenance. This chain is T-complex protein 1 subunit zeta (CCT6A), found in Bos taurus (Bovine).